Reading from the N-terminus, the 165-residue chain is Phosphopantetheine adenylyltransferase (165 aa).

S10 is a substrate binding site. ATP-binding positions include 10-11 and H18; that span reads SF. 3 residues coordinate substrate: K42, T79, and R93. ATP contacts are provided by residues 94 to 96, E104, and 129 to 135; these read GLR and VRPITAT.

This sequence belongs to the bacterial CoaD family. In terms of assembly, homohexamer. The cofactor is Mg(2+).

It localises to the cytoplasm. The catalysed reaction is (R)-4'-phosphopantetheine + ATP + H(+) = 3'-dephospho-CoA + diphosphate. It participates in cofactor biosynthesis; coenzyme A biosynthesis; CoA from (R)-pantothenate: step 4/5. In terms of biological role, reversibly transfers an adenylyl group from ATP to 4'-phosphopantetheine, yielding dephospho-CoA (dPCoA) and pyrophosphate. The chain is Phosphopantetheine adenylyltransferase from Nitrobacter winogradskyi (strain ATCC 25391 / DSM 10237 / CIP 104748 / NCIMB 11846 / Nb-255).